The sequence spans 404 residues: Probable tRNA sulfurtransferase (404 aa).

Positions 60-165 constitute a THUMP domain; that stretch reads TAVAESLKQV…EEAAYLSYET (106 aa). Residues 183–184, 208–209, R265, G287, and Q296 each bind ATP; these read ML and HF.

This sequence belongs to the ThiI family.

It is found in the cytoplasm. The catalysed reaction is [ThiI sulfur-carrier protein]-S-sulfanyl-L-cysteine + a uridine in tRNA + 2 reduced [2Fe-2S]-[ferredoxin] + ATP + H(+) = [ThiI sulfur-carrier protein]-L-cysteine + a 4-thiouridine in tRNA + 2 oxidized [2Fe-2S]-[ferredoxin] + AMP + diphosphate. It catalyses the reaction [ThiS sulfur-carrier protein]-C-terminal Gly-Gly-AMP + S-sulfanyl-L-cysteinyl-[cysteine desulfurase] + AH2 = [ThiS sulfur-carrier protein]-C-terminal-Gly-aminoethanethioate + L-cysteinyl-[cysteine desulfurase] + A + AMP + 2 H(+). The protein operates within cofactor biosynthesis; thiamine diphosphate biosynthesis. In terms of biological role, catalyzes the ATP-dependent transfer of a sulfur to tRNA to produce 4-thiouridine in position 8 of tRNAs, which functions as a near-UV photosensor. Also catalyzes the transfer of sulfur to the sulfur carrier protein ThiS, forming ThiS-thiocarboxylate. This is a step in the synthesis of thiazole, in the thiamine biosynthesis pathway. The sulfur is donated as persulfide by IscS. This Streptococcus pneumoniae (strain 70585) protein is Probable tRNA sulfurtransferase.